The chain runs to 190 residues: Elongation factor P-like protein (190 aa).

The protein belongs to the elongation factor P family.

The polypeptide is Elongation factor P-like protein (Marinomonas sp. (strain MWYL1)).